A 1027-amino-acid chain; its full sequence is Error-prone DNA polymerase (1027 aa).

The protein belongs to the DNA polymerase type-C family. DnaE2 subfamily.

The protein localises to the cytoplasm. The enzyme catalyses DNA(n) + a 2'-deoxyribonucleoside 5'-triphosphate = DNA(n+1) + diphosphate. In terms of biological role, DNA polymerase involved in damage-induced mutagenesis and translesion synthesis (TLS). It is not the major replicative DNA polymerase. The protein is Error-prone DNA polymerase of Dechloromonas aromatica (strain RCB).